Here is a 356-residue protein sequence, read N- to C-terminus: Methylthioribose-1-phosphate isomerase (356 aa).

The Proton donor role is filled by aspartate 234.

The protein belongs to the eIF-2B alpha/beta/delta subunits family. MtnA subfamily.

Its subcellular location is the cytoplasm. The protein resides in the nucleus. The catalysed reaction is 5-(methylsulfanyl)-alpha-D-ribose 1-phosphate = 5-(methylsulfanyl)-D-ribulose 1-phosphate. It functions in the pathway amino-acid biosynthesis; L-methionine biosynthesis via salvage pathway; L-methionine from S-methyl-5-thio-alpha-D-ribose 1-phosphate: step 1/6. Its function is as follows. Catalyzes the interconversion of methylthioribose-1-phosphate (MTR-1-P) into methylthioribulose-1-phosphate (MTRu-1-P). This chain is Methylthioribose-1-phosphate isomerase (mri1), found in Schizosaccharomyces japonicus (strain yFS275 / FY16936) (Fission yeast).